The following is a 364-amino-acid chain: 3-isopropylmalate dehydrogenase (364 aa).

77–90 contacts NAD(+); it reads GPKWDNLPTDKRPE. Substrate contacts are provided by Arg97, Arg107, Arg135, and Asp224. 3 residues coordinate Mg(2+): Asp224, Asp248, and Asp252. 281-293 provides a ligand contact to NAD(+); that stretch reads GSAPDIAGKGIAN.

This sequence belongs to the isocitrate and isopropylmalate dehydrogenases family. LeuB type 1 subfamily. Homodimer. Mg(2+) serves as cofactor. It depends on Mn(2+) as a cofactor.

Its subcellular location is the cytoplasm. It carries out the reaction (2R,3S)-3-isopropylmalate + NAD(+) = 4-methyl-2-oxopentanoate + CO2 + NADH. It functions in the pathway amino-acid biosynthesis; L-leucine biosynthesis; L-leucine from 3-methyl-2-oxobutanoate: step 3/4. Functionally, catalyzes the oxidation of 3-carboxy-2-hydroxy-4-methylpentanoate (3-isopropylmalate) to 3-carboxy-4-methyl-2-oxopentanoate. The product decarboxylates to 4-methyl-2 oxopentanoate. The sequence is that of 3-isopropylmalate dehydrogenase (leuB) from Aquifex aeolicus (strain VF5).